Consider the following 370-residue polypeptide: Pyruvate dehydrogenase E1 component subunit alpha (370 aa).

In terms of assembly, heterodimer of an alpha and a beta chain. The cofactor is thiamine diphosphate.

The enzyme catalyses N(6)-[(R)-lipoyl]-L-lysyl-[protein] + pyruvate + H(+) = N(6)-[(R)-S(8)-acetyldihydrolipoyl]-L-lysyl-[protein] + CO2. Its function is as follows. The pyruvate dehydrogenase complex catalyzes the overall conversion of pyruvate to acetyl-CoA and CO(2). It contains multiple copies of three enzymatic components: pyruvate dehydrogenase (E1), dihydrolipoamide acetyltransferase (E2) and lipoamide dehydrogenase (E3). The sequence is that of Pyruvate dehydrogenase E1 component subunit alpha (pdhA) from Staphylococcus aureus (strain MRSA252).